The chain runs to 165 residues: Nucleotide-binding protein Chy400_2003 (165 aa).

It belongs to the YajQ family.

In terms of biological role, nucleotide-binding protein. This Chloroflexus aurantiacus (strain ATCC 29364 / DSM 637 / Y-400-fl) protein is Nucleotide-binding protein Chy400_2003.